Consider the following 618-residue polypeptide: 1-aminocyclopropane-1-carboxylate synthase-like protein 1 (618 aa).

Low complexity predominate over residues 11-26 (QGTQTPAAQTTCAPST). The segment at 11-54 (QGTQTPAAQTTCAPSTMSSSSRPPLETLQAQSVSADETPGSALP) is disordered. The span at 27–45 (MSSSSRPPLETLQAQSVSA) shows a compositional bias: polar residues. E122 is a binding site for substrate. K340 carries the post-translational modification N6-(pyridoxal phosphate)lysine.

The protein belongs to the class-I pyridoxal-phosphate-dependent aminotransferase family.

This chain is 1-aminocyclopropane-1-carboxylate synthase-like protein 1 (accs), found in Takifugu rubripes (Japanese pufferfish).